The sequence spans 88 residues: Small ribosomal subunit protein eS21 (88 aa).

The protein belongs to the eukaryotic ribosomal protein eS21 family. Component of the small ribosomal subunit. Mature ribosomes consist of a small (40S) and a large (60S) subunit. The 40S subunit contains about 33 different proteins and 1 molecule of RNA (18S). The 60S subunit contains about 49 different proteins and 3 molecules of RNA (25S, 5.8S and 5S).

The protein resides in the cytoplasm. In terms of biological role, required for the processing of the 20S rRNA-precursor to mature 18S rRNA in a late step of the maturation of 40S ribosomal subunits. Has a physiological role leading to 18S rRNA stability. The chain is Small ribosomal subunit protein eS21 (rps21) from Aspergillus fumigatus (strain ATCC MYA-4609 / CBS 101355 / FGSC A1100 / Af293) (Neosartorya fumigata).